Consider the following 251-residue polypeptide: Diphthine synthase (251 aa).

Residues Leu-9, Asp-85, Val-88, Ser-113–Ile-114, Leu-165, Ala-202, and His-227 contribute to the S-adenosyl-L-methionine site.

This sequence belongs to the diphthine synthase family. Homodimer.

It carries out the reaction 2-[(3S)-amino-3-carboxypropyl]-L-histidyl-[translation elongation factor 2] + 3 S-adenosyl-L-methionine = diphthine-[translation elongation factor 2] + 3 S-adenosyl-L-homocysteine + 3 H(+). It participates in protein modification; peptidyl-diphthamide biosynthesis. Its function is as follows. S-adenosyl-L-methionine-dependent methyltransferase that catalyzes the trimethylation of the amino group of the modified target histidine residue in translation elongation factor 2 (EF-2), to form an intermediate called diphthine. The three successive methylation reactions represent the second step of diphthamide biosynthesis. In Methanosphaerula palustris (strain ATCC BAA-1556 / DSM 19958 / E1-9c), this protein is Diphthine synthase.